A 245-amino-acid chain; its full sequence is Probable octanoyltransferase 2 (245 aa).

The BPL/LPL catalytic domain occupies 38 to 227 (MEYKPVLYFQ…SIEKEFDIKE (190 aa)). Residues 89 to 96 (RGGYETYH), 157 to 159 (SIG), and 170 to 172 (GMA) contribute to the substrate site. Cys-188 functions as the Acyl-thioester intermediate in the catalytic mechanism.

Belongs to the LipB family.

Its subcellular location is the cytoplasm. The enzyme catalyses octanoyl-[ACP] + L-lysyl-[protein] = N(6)-octanoyl-L-lysyl-[protein] + holo-[ACP] + H(+). The protein operates within protein modification; protein lipoylation via endogenous pathway; protein N(6)-(lipoyl)lysine from octanoyl-[acyl-carrier-protein]: step 1/2. In terms of biological role, catalyzes the transfer of endogenously produced octanoic acid from octanoyl-acyl-carrier-protein onto the lipoyl domains of lipoate-dependent enzymes. Lipoyl-ACP can also act as a substrate although octanoyl-ACP is likely to be the physiological substrate. This Picrophilus torridus (strain ATCC 700027 / DSM 9790 / JCM 10055 / NBRC 100828 / KAW 2/3) protein is Probable octanoyltransferase 2.